We begin with the raw amino-acid sequence, 842 residues long: Probable receptor-like protein kinase At5g61350 (842 aa).

Positions 1–27 (MGGDFRHFSSHVSLLLLFLLIVKSSSS) are cleaved as a signal peptide. The Extracellular segment spans residues 28-425 (FTPADNYLID…IGGMSSKKLA (398 aa)). N-linked (GlcNAc...) asparagine glycosylation is found at Asn-81, Asn-125, Asn-252, Asn-294, Asn-359, and Asn-365. A helical membrane pass occupies residues 426–446 (IAGIGFVMALTAFLGVVVLLV). Residues 447 to 842 (RWQRRPKDWQ…EMQSPSHSIP (396 aa)) lie on the Cytoplasmic side of the membrane. Residues 525–803 (FDENAVCGVG…GDVLWNLEYA (279 aa)) form the Protein kinase domain. ATP is bound by residues 531-539 (CGVGGFGKV) and Lys-553. Asp-655 (proton acceptor) is an active-site residue.

The protein belongs to the protein kinase superfamily. Ser/Thr protein kinase family.

It is found in the membrane. The polypeptide is Probable receptor-like protein kinase At5g61350 (Arabidopsis thaliana (Mouse-ear cress)).